Consider the following 391-residue polypeptide: 8-amino-7-oxononanoate synthase (391 aa).

Arg24 contacts substrate. Pyridoxal 5'-phosphate is bound at residue 112 to 113; it reads GY. His137 is a binding site for substrate. Ser183, His211, and Thr240 together coordinate pyridoxal 5'-phosphate. Lys243 carries the N6-(pyridoxal phosphate)lysine modification. Thr357 contacts substrate.

This sequence belongs to the class-II pyridoxal-phosphate-dependent aminotransferase family. BioF subfamily. As to quaternary structure, homodimer. It depends on pyridoxal 5'-phosphate as a cofactor.

It catalyses the reaction 6-carboxyhexanoyl-[ACP] + L-alanine + H(+) = (8S)-8-amino-7-oxononanoate + holo-[ACP] + CO2. It functions in the pathway cofactor biosynthesis; biotin biosynthesis. In terms of biological role, catalyzes the decarboxylative condensation of pimeloyl-[acyl-carrier protein] and L-alanine to produce 8-amino-7-oxononanoate (AON), [acyl-carrier protein], and carbon dioxide. This is 8-amino-7-oxononanoate synthase from Alkalilimnicola ehrlichii (strain ATCC BAA-1101 / DSM 17681 / MLHE-1).